The following is a 101-amino-acid chain: Urease subunit beta (101 aa).

The protein belongs to the urease beta subunit family. As to quaternary structure, heterotrimer of UreA (gamma), UreB (beta) and UreC (alpha) subunits. Three heterotrimers associate to form the active enzyme.

The protein resides in the cytoplasm. The enzyme catalyses urea + 2 H2O + H(+) = hydrogencarbonate + 2 NH4(+). The protein operates within nitrogen metabolism; urea degradation; CO(2) and NH(3) from urea (urease route): step 1/1. The polypeptide is Urease subunit beta (Cupriavidus metallidurans (strain ATCC 43123 / DSM 2839 / NBRC 102507 / CH34) (Ralstonia metallidurans)).